The primary structure comprises 91 residues: Mercuric transport protein periplasmic component (91 aa).

Residues 1–19 (MKKLFASLALAAVVAPVWA) form the signal peptide. The HMA domain occupies 22-88 (QTVTLSVPGM…ATADAGYPSS (67 aa)). Hg(2+)-binding residues include cysteine 33 and cysteine 36.

Belongs to the MerP family. In terms of assembly, monomer.

It is found in the periplasm. In terms of biological role, involved in mercury resistance. Acts as a mercury scavenger that specifically binds to a mercuric ion in the periplasm and probably passes it to the cytoplasmic mercuric reductase MerA via the mercuric transport protein MerT. This Pseudomonas aeruginosa protein is Mercuric transport protein periplasmic component.